A 119-amino-acid chain; its full sequence is V-type proton ATPase subunit F (119 aa).

Belongs to the V-ATPase F subunit family. V-ATPase is a heteromultimeric enzyme made up of two complexes: the ATP-hydrolytic V1 complex and the proton translocation V0 complex. The V1 complex consists of three catalytic AB heterodimers that form a heterohexamer, three peripheral stalks each consisting of EG heterodimers, one central rotor including subunits D and F, and the regulatory subunits C and H. The proton translocation complex V0 consists of the proton transport subunit a, a ring of proteolipid subunits c9c'', rotary subunit d, subunits e and f, and the accessory subunits ATP6AP1/Ac45 and ATP6AP2/PRR.

The protein localises to the cytoplasmic vesicle. It is found in the secretory vesicle. The protein resides in the synaptic vesicle membrane. Its subcellular location is the clathrin-coated vesicle membrane. Subunit of the V1 complex of vacuolar(H+)-ATPase (V-ATPase), a multisubunit enzyme composed of a peripheral complex (V1) that hydrolyzes ATP and a membrane integral complex (V0) that translocates protons. V-ATPase is responsible for acidifying and maintaining the pH of intracellular compartments and in some cell types, is targeted to the plasma membrane, where it is responsible for acidifying the extracellular environment. This is V-type proton ATPase subunit F (ATP6V1F) from Homo sapiens (Human).